A 626-amino-acid chain; its full sequence is Serine/threonine-protein kinase PknB (626 aa).

Residues Met1–Trp332 lie on the Cytoplasmic side of the membrane. Residues Tyr11 to Val274 form the Protein kinase domain. Residues Leu17 to Val25, Lys40, and Glu93 to Val95 contribute to the ATP site. The Proton acceptor role is filled by Asp138. Residues Lys140 to Asn143 and Asp156 contribute to the ATP site. Asn143 and Asp156 together coordinate Mg(2+). Ser166 and Ser169 each carry phosphoserine; by autocatalysis. Phosphothreonine; by autocatalysis is present on residues Thr171, Thr173, and Thr294. A Phosphoserine; by autocatalysis modification is found at Ser295. The disordered stretch occupies residues Ser299 to Asp323. Thr309 bears the Phosphothreonine; by autocatalysis mark. Residues Pro311–Asp323 are compositionally biased toward basic and acidic residues. The chain crosses the membrane as a helical span at residues Val333–Phe353. The Extracellular segment spans residues Gly354–Gln626. PASTA domains follow at residues Ile356–Thr422, Gly423–Ser490, Gly491–Lys557, and Gly558–Gln626.

This sequence belongs to the protein kinase superfamily. Ser/Thr protein kinase family. Homodimer. Post-translationally, autophosphorylated. Dephosphorylated by PstP.

It localises to the cell membrane. The enzyme catalyses L-seryl-[protein] + ATP = O-phospho-L-seryl-[protein] + ADP + H(+). It carries out the reaction L-threonyl-[protein] + ATP = O-phospho-L-threonyl-[protein] + ADP + H(+). Functionally, protein kinase that regulates many aspects of mycobacterial physiology. Is a key component of a signal transduction pathway that regulates cell growth, cell shape and cell division via phosphorylation of target proteins. The polypeptide is Serine/threonine-protein kinase PknB (pknB) (Mycobacterium bovis (strain ATCC BAA-935 / AF2122/97)).